A 346-amino-acid polypeptide reads, in one-letter code: Fructose-1,6-bisphosphatase class 1 (346 aa).

Positions 96, 119, 121, and 122 each coordinate Mg(2+). Substrate contacts are provided by residues Asp-122–Ser-125, Asn-214, Tyr-247, and Lys-277. Glu-283 is a binding site for Mg(2+).

Belongs to the FBPase class 1 family. In terms of assembly, homotetramer. Mg(2+) serves as cofactor.

It is found in the cytoplasm. It carries out the reaction beta-D-fructose 1,6-bisphosphate + H2O = beta-D-fructose 6-phosphate + phosphate. It functions in the pathway carbohydrate biosynthesis; gluconeogenesis. The protein is Fructose-1,6-bisphosphatase class 1 of Cytophaga hutchinsonii (strain ATCC 33406 / DSM 1761 / CIP 103989 / NBRC 15051 / NCIMB 9469 / D465).